A 403-amino-acid chain; its full sequence is Queuine tRNA-ribosyltransferase catalytic subunit 1 (403 aa).

An N-acetylalanine modification is found at Ala-2. Asp-105 serves as the catalytic Proton acceptor. 105–109 (DSGGF) contributes to the queuine binding site. The residue at position 139 (Ser-139) is a Phosphoserine. Queuine-binding residues include Asp-159, Gln-202, and Gly-229. Residues 260–266 (GVGYATD) form an RNA binding region. Asp-279 serves as the catalytic Nucleophile. An RNA binding; important for wobble base 34 recognition region spans residues 284-288 (TRTAR). Residues Cys-317, Cys-319, Cys-322, and His-348 each coordinate Zn(2+).

It belongs to the queuine tRNA-ribosyltransferase family. In terms of assembly, heterodimer of a catalytic subunit QTRT1 and an accessory subunit QTRT2. Zn(2+) is required as a cofactor.

Its subcellular location is the cytoplasm. It is found in the mitochondrion outer membrane. It catalyses the reaction guanosine(34) in tRNA + queuine = queuosine(34) in tRNA + guanine. Catalytic subunit of the queuine tRNA-ribosyltransferase (TGT) that catalyzes the base-exchange of a guanine (G) residue with queuine (Q) at position 34 (anticodon wobble position) in tRNAs with GU(N) anticodons (tRNA-Asp, -Asn, -His and -Tyr), resulting in the hypermodified nucleoside queuosine (7-(((4,5-cis-dihydroxy-2-cyclopenten-1-yl)amino)methyl)-7-deazaguanosine). Catalysis occurs through a double-displacement mechanism. The nucleophile active site attacks the C1' of nucleotide 34 to detach the guanine base from the RNA, forming a covalent enzyme-RNA intermediate. The proton acceptor active site deprotonates the incoming queuine, allowing a nucleophilic attack on the C1' of the ribose to form the product. The sequence is that of Queuine tRNA-ribosyltransferase catalytic subunit 1 from Rattus norvegicus (Rat).